The chain runs to 169 residues: Myosin regulatory light chain 11 (169 aa).

Ala2 is modified (n,N,N-trimethylalanine). Residues Ser15 and Ser16 each carry the phosphoserine modification. Thr25 and Thr35 each carry phosphothreonine. One can recognise an EF-hand 1 domain in the interval 25-60; the sequence is TQIQEFKEAFTVIDQNRDGIIDKEDLRDTFAAMGRL. The Ca(2+) site is built by Asp38, Asn40, Asp42, and Asp49. Phosphoserine is present on Ser75. EF-hand domains follow at residues 95–130 and 131–166; these read DPED…QCDR and FSQE…GDAK. Residue Thr101 is modified to Phosphothreonine.

In terms of assembly, myosin is a hexamer of 2 heavy chains and 4 light chains.

Its function is as follows. Myosin regulatory subunit that plays an essential to maintain muscle integrity during early development. Plays a role in muscle contraction. The polypeptide is Myosin regulatory light chain 11 (Myl11) (Rattus norvegicus (Rat)).